The chain runs to 346 residues: Aspartate-semialdehyde dehydrogenase (346 aa).

Residues 12–15 (SGAV) and 40–41 (RS) contribute to the NADP(+) site. Arg-101 serves as a coordination point for phosphate. Residue Cys-131 is the Acyl-thioester intermediate of the active site. Residue Gln-158 coordinates substrate. 161 to 162 (SG) lines the NADP(+) pocket. Lys-225 is a binding site for phosphate. Residue Arg-246 coordinates substrate. His-253 acts as the Proton acceptor in catalysis. Gln-326 serves as a coordination point for NADP(+).

Belongs to the aspartate-semialdehyde dehydrogenase family. As to quaternary structure, homodimer.

It carries out the reaction L-aspartate 4-semialdehyde + phosphate + NADP(+) = 4-phospho-L-aspartate + NADPH + H(+). Its pathway is amino-acid biosynthesis; L-lysine biosynthesis via DAP pathway; (S)-tetrahydrodipicolinate from L-aspartate: step 2/4. The protein operates within amino-acid biosynthesis; L-methionine biosynthesis via de novo pathway; L-homoserine from L-aspartate: step 2/3. It participates in amino-acid biosynthesis; L-threonine biosynthesis; L-threonine from L-aspartate: step 2/5. Its function is as follows. Catalyzes the NADPH-dependent formation of L-aspartate-semialdehyde (L-ASA) by the reductive dephosphorylation of L-aspartyl-4-phosphate. In Helicobacter pylori (strain ATCC 700392 / 26695) (Campylobacter pylori), this protein is Aspartate-semialdehyde dehydrogenase.